Here is a 157-residue protein sequence, read N- to C-terminus: Probable succinate transporter subunit YjjB (157 aa).

4 consecutive transmembrane segments (helical) span residues 8–28 (FALA…AMVF), 50–70 (MILM…SMLV), 87–107 (VFTV…TAMI), and 129–149 (FLTA…PGLW).

This sequence belongs to the ThrE exporter (TC 2.A.79) family. As to quaternary structure, the transporter is composed of YjjB and YjjP.

The protein localises to the cell inner membrane. In terms of biological role, involved in succinate export with YjjP. Both proteins are required for export. This Escherichia coli (strain SE11) protein is Probable succinate transporter subunit YjjB.